Consider the following 197-residue polypeptide: Viral polyamine acetyltransferase (197 aa).

Asn-22 contacts acetyl-CoA. Glu-27 is a catalytic residue. Residues 102–182 form the N-acetyltransferase domain; the sequence is SYTPDDKCLY…YQYGITKPFD (81 aa). Acetyl-CoA contacts are provided by Ile-115, Ser-117, Gly-121, Gly-123, Ala-125, Thr-126, Thr-149, Asn-150, and Lys-159.

The protein belongs to the acetyltransferase family.

The catalysed reaction is spermine + acetyl-CoA = N(1)-acetylspermine + CoA + H(+). It carries out the reaction spermidine + acetyl-CoA = N(1)-acetylspermidine + CoA + H(+). The enzyme catalyses spermidine + acetyl-CoA = N(8)-acetylspermidine + CoA + H(+). It catalyses the reaction putrescine + acetyl-CoA = N-acetylputrescine + CoA + H(+). The catalysed reaction is cadaverine + acetyl-CoA = N-acetylcadaverine + CoA + H(+). It carries out the reaction sym-homospermidine + acetyl-CoA = N(1)-acetyl-sym-homospermidine + CoA + H(+). Functionally, acetylates polyamines such as spermine, spermidine, cadaverine, homospermidine and putrescine (the latter with low efficiency). May play a role in the regulation of polyamine catabolism in the host during viral replication. This is Viral polyamine acetyltransferase from Chlorella (PBCV-1).